The primary structure comprises 688 residues: Glycine--tRNA ligase beta subunit (688 aa).

It belongs to the class-II aminoacyl-tRNA synthetase family. In terms of assembly, tetramer of two alpha and two beta subunits.

The protein localises to the cytoplasm. It carries out the reaction tRNA(Gly) + glycine + ATP = glycyl-tRNA(Gly) + AMP + diphosphate. The protein is Glycine--tRNA ligase beta subunit of Listeria welshimeri serovar 6b (strain ATCC 35897 / DSM 20650 / CCUG 15529 / CIP 8149 / NCTC 11857 / SLCC 5334 / V8).